The primary structure comprises 230 residues: Leucyl/phenylalanyl-tRNA--protein transferase (230 aa).

Belongs to the L/F-transferase family.

The protein resides in the cytoplasm. It carries out the reaction N-terminal L-lysyl-[protein] + L-leucyl-tRNA(Leu) = N-terminal L-leucyl-L-lysyl-[protein] + tRNA(Leu) + H(+). The enzyme catalyses N-terminal L-arginyl-[protein] + L-leucyl-tRNA(Leu) = N-terminal L-leucyl-L-arginyl-[protein] + tRNA(Leu) + H(+). It catalyses the reaction L-phenylalanyl-tRNA(Phe) + an N-terminal L-alpha-aminoacyl-[protein] = an N-terminal L-phenylalanyl-L-alpha-aminoacyl-[protein] + tRNA(Phe). Functions in the N-end rule pathway of protein degradation where it conjugates Leu, Phe and, less efficiently, Met from aminoacyl-tRNAs to the N-termini of proteins containing an N-terminal arginine or lysine. This Hamiltonella defensa subsp. Acyrthosiphon pisum (strain 5AT) protein is Leucyl/phenylalanyl-tRNA--protein transferase.